Consider the following 955-residue polypeptide: Eukaryotic translation initiation factor 3 subunit C (955 aa).

Disordered stretches follow at residues 1-22 (MSRFFAGGSDSDSDSSSDSEPV) and 157-299 (RAAP…EEGW). The span at 162–183 (DFAEEEEDDEREDEKGSDEEEE) shows a compositional bias: acidic residues. Residues 206 to 218 (VKPVADSDSSDWG) show a composition bias toward low complexity. The segment covering 219–229 (SDSDSDSTSSD) has biased composition (acidic residues). Residues 230 to 250 (EDAKYTSIRDRFLKKPEKGTE) are compositionally biased toward basic and acidic residues. Residues 288–297 (MFDENEEEEE) are compositionally biased toward acidic residues. The PCI domain occupies 658-834 (FHMHINLELL…ETIVMHRSEP (177 aa)). The tract at residues 865–955 (NFFQRGGNQG…RNVEYQNKAE (91 aa)) is disordered. A compositionally biased stretch (low complexity) spans 882–894 (YRNQNQNQNWNNN). The span at 911–955 (GEGREQREHHRDHHRDQREHREHQNREFREQREQMRNVEYQNKAE) shows a compositional bias: basic and acidic residues.

This sequence belongs to the eIF-3 subunit C family. Component of the eukaryotic translation initiation factor 3 (eIF-3) complex.

The protein localises to the cytoplasm. Functionally, component of the eukaryotic translation initiation factor 3 (eIF-3) complex, which is involved in protein synthesis of a specialized repertoire of mRNAs and, together with other initiation factors, stimulates binding of mRNA and methionyl-tRNAi to the 40S ribosome. The eIF-3 complex specifically targets and initiates translation of a subset of mRNAs involved in cell proliferation. This is Eukaryotic translation initiation factor 3 subunit C from Anopheles gambiae (African malaria mosquito).